Here is a 387-residue protein sequence, read N- to C-terminus: D(4) dopamine receptor (387 aa).

Over 1 to 34 (MGNSSATEDGGLLAGRGPESLGTGAGLGGAGAAA) the chain is Extracellular. Asn3 is a glycosylation site (N-linked (GlcNAc...) asparagine). A helical transmembrane segment spans residues 35-57 (LVGGVLLIGLVLAGNSLVCVSVA). Over 58 to 67 (SERTLQTPTN) the chain is Cytoplasmic. Residues 68 to 90 (YFIVSLAAADLLLAVLVLPLFVY) traverse the membrane as a helical segment. Residue Asp77 participates in Na(+) binding. Topologically, residues 91–106 (SEVQGGVWLLSPRLCD) are extracellular. Cys105 and Cys180 form a disulfide bridge. The chain crosses the membrane as a helical span at residues 107 to 128 (TLMAMDVMLCTASIFNLCAISV). Position 119 (Ser119) interacts with Na(+). Over 129–146 (DRFVAVTVPLRYNQQGQC) the chain is Cytoplasmic. The chain crosses the membrane as a helical span at residues 147-170 (QLLLIAATWLLSAAVASPVVCGLN). Over 171–186 (DVPGRDPAVCCLENRD) the chain is Extracellular. The chain crosses the membrane as a helical span at residues 187-208 (YVVYSSVCSFFLPCPLMLLLYW). At 209–314 (ATFRGLRRWE…ITGRERKAMR (106 aa)) the chain is on the cytoplasmic side. 2 disordered regions span residues 224–247 (KLHS…TQGP) and 287–306 (AALP…AKIT). Residues 315–337 (VLPVVVGAFLVCWTPFFVVHITR) form a helical membrane-spanning segment. Topologically, residues 338–346 (ALCPACFVS) are extracellular. The cysteines at positions 340 and 343 are disulfide-linked. Residues 347–369 (PRLVSAVTWLGYVNSALNPIIYT) traverse the membrane as a helical segment. Residues 370 to 387 (IFNAEFRSVFRKTLRLRC) lie on the Cytoplasmic side of the membrane. Residue Cys387 is the site of S-palmitoyl cysteine attachment.

It belongs to the G-protein coupled receptor 1 family. In terms of assembly, forms homo- and heterooligomers with DRD2. D4.7 allele exhibits higher affinity for homodimers compared to DRD2 heterodimers, while alleles D42. and 4.4 have similar affinities for both. The interaction with DRD2 may modulate agonist-induced downstream signaling. Interacts with CLIC6. Interacts with GPRASP1. May interact with ADORA2A. Interacts with KLHL12. Post-translationally, palmitoylated. Palmitoylation of the C-terminal Cys is important for normal expression at the cell membrane. As to expression, detected in olfactory bulb, hypothalamus, olfactory tubercle, brainstem and striatum.

It localises to the cell membrane. In terms of biological role, dopamine receptor responsible for neuronal signaling in the mesolimbic system of the brain, an area of the brain that regulates emotion and complex behavior. Activated by dopamine, but also by epinephrine and norepinephrine, and by numerous synthetic agonists and drugs. Agonist binding triggers signaling via G proteins that inhibit adenylyl cyclase. Modulates the circadian rhythm of contrast sensitivity by regulating the rhythmic expression of NPAS2 in the retinal ganglion cells. The sequence is that of D(4) dopamine receptor (Drd4) from Mus musculus (Mouse).